The sequence spans 244 residues: Ribosomal RNA large subunit methyltransferase E (244 aa).

S-adenosyl-L-methionine-binding residues include Gly81, Trp83, Asp109, Asp125, and Asp149. Lys189 (proton acceptor) is an active-site residue.

The protein belongs to the class I-like SAM-binding methyltransferase superfamily. RNA methyltransferase RlmE family.

Its subcellular location is the cytoplasm. It carries out the reaction uridine(2552) in 23S rRNA + S-adenosyl-L-methionine = 2'-O-methyluridine(2552) in 23S rRNA + S-adenosyl-L-homocysteine + H(+). Functionally, specifically methylates the uridine in position 2552 of 23S rRNA at the 2'-O position of the ribose in the fully assembled 50S ribosomal subunit. The chain is Ribosomal RNA large subunit methyltransferase E from Cereibacter sphaeroides (strain ATCC 17029 / ATH 2.4.9) (Rhodobacter sphaeroides).